The following is a 374-amino-acid chain: Putative heme chaperone HemW-like protein (374 aa).

Residues Met1–Lys231 form the Radical SAM core domain.

The protein belongs to the anaerobic coproporphyrinogen-III oxidase family. HemW subfamily.

The protein localises to the cytoplasm. Its function is as follows. Might be a heme chaperone; in E.coli heme binds independently of binding to [4Fe-4S] or S-adenosyl-L-methionine. This chain is Putative heme chaperone HemW-like protein, found in Buchnera aphidicola subsp. Baizongia pistaciae (strain Bp).